Consider the following 838-residue polypeptide: Shutoff protein (838 aa).

A disordered region spans residues 1–102 (MEDQHSAASE…EQEEDSPDRY (102 aa)). Over residues 18–35 (TLPPPPPPPPPPTSPPPS) the composition is skewed to pro residues. Over residues 52–65 (TCSSSSSSSASSEC) the composition is skewed to low complexity. The segment at 291–353 (LMQTLLVRRA…ACMVTVQLHC (63 aa)) is binding to host EIF4G. Residues 356–474 (TFLTSREMVR…SLWTGFDERT (119 aa)) form the RRM domain. Phosphotyrosine; by host occurs at positions 373 and 690. The segment at 693–838 (PHTGEELNTA…QELRRPQRGS (146 aa)) is disordered. The segment covering 701 to 710 (TAAPSTAHHA) has biased composition (low complexity). Basic and acidic residues-rich tracts occupy residues 737–746 (SYADRVRSEL) and 770–787 (HSRD…DQRQ). Low complexity predominate over residues 813–829 (QALLHQQQQQQEHQPAQ).

It belongs to the adenoviridae shutoff protein family. Monomer. Interacts with hexon protein; this interaction allows chaperoning and trimerization of hexon proteins. Interacts (via N-terminus) with host initiation factor EIF4G (via C-terminus). Interacts (via RRM domain) with viral mRNAs that contain the tripartite leader; this interaction allows ribosome shunting and expression of viral late mRNAs. Might be cleaved by the viral protease. Post-translationally, phosphorylated. Tyrosine phosphorylation enhances preferential binding to tripartite leader mRNAs and allows ribosome shunting. In terms of processing, methylated. Asymmetric dimethylation by host PRMT1 of the Arg/Gly-rich region may regulate shutoff protein binding to hexon and promote the capsid assembly in the nucleus.

The protein localises to the host cytoplasm. Its function is as follows. Protein that inhibits host translation while promoting late viral translation by ribosome shunting. Blocks host cap-dependent translation by binding to eIF4G, displacing MKNK1 from cap initiation complexes and preventing EIF4E phosphorylation. Binds to the tripartite leader sequence of viral late mRNAs and recruits host eIF4G, PABPC1/poly-A binding protein and 40S ribosomes subunits on viral mRNAs, allowing ribosome shunting and efficient translation of late viral mRNAs even though conventional translation via ribosome scanning from the cap has been shut off in the host cell. During assembly, acts as a chaperone protein that helps hexon proteins assembly into trimers. This is Shutoff protein from Porcine adenovirus A serotype 3 (PAdV-3).